We begin with the raw amino-acid sequence, 420 residues long: Glutamyl-tRNA reductase (420 aa).

Substrate is bound by residues 49 to 52 (TCNR), Ser107, 112 to 114 (EPQ), and Gln118. Cys50 (nucleophile) is an active-site residue. 187–192 (GAGETI) serves as a coordination point for NADP(+).

This sequence belongs to the glutamyl-tRNA reductase family. As to quaternary structure, homodimer.

It catalyses the reaction (S)-4-amino-5-oxopentanoate + tRNA(Glu) + NADP(+) = L-glutamyl-tRNA(Glu) + NADPH + H(+). Its pathway is porphyrin-containing compound metabolism; protoporphyrin-IX biosynthesis; 5-aminolevulinate from L-glutamyl-tRNA(Glu): step 1/2. Catalyzes the NADPH-dependent reduction of glutamyl-tRNA(Glu) to glutamate 1-semialdehyde (GSA). The polypeptide is Glutamyl-tRNA reductase (Photobacterium profundum (strain SS9)).